We begin with the raw amino-acid sequence, 169 residues long: UPF0398 protein Spy49_1277c (169 aa).

The protein belongs to the UPF0398 family.

The protein is UPF0398 protein Spy49_1277c of Streptococcus pyogenes serotype M49 (strain NZ131).